Here is a 463-residue protein sequence, read N- to C-terminus: L-seryl-tRNA(Sec) selenium transferase (463 aa).

At lysine 295 the chain carries N6-(pyridoxal phosphate)lysine.

This sequence belongs to the SelA family. In terms of assembly, homodecamer; pentamer of dimers. Binds only one seryl-tRNA(Sec) per dimer. Requires pyridoxal 5'-phosphate as cofactor.

It is found in the cytoplasm. It catalyses the reaction L-seryl-tRNA(Sec) + selenophosphate + H(+) = L-selenocysteinyl-tRNA(Sec) + phosphate. It participates in aminoacyl-tRNA biosynthesis; selenocysteinyl-tRNA(Sec) biosynthesis; selenocysteinyl-tRNA(Sec) from L-seryl-tRNA(Sec) (bacterial route): step 1/1. Its function is as follows. Converts seryl-tRNA(Sec) to selenocysteinyl-tRNA(Sec) required for selenoprotein biosynthesis. The sequence is that of L-seryl-tRNA(Sec) selenium transferase from Escherichia coli O81 (strain ED1a).